The following is a 72-amino-acid chain: Galensin (72 aa).

A signal peptide spans 1 to 22; it reads MLTLKKSMLLLFFLGLVSVSLA. A propeptide spanning residues 23–48 is cleaved from the precursor; the sequence is DDKREDEAEEGEDKRAAEEERNVEKR. Residue F71 is modified to Phenylalanine amide.

Belongs to the frog skin active peptide (FSAP) family. Brevinin subfamily. Homodimer; disulfide-linked. Expressed by the skin glands.

It localises to the secreted. Functionally, antibacterial activity against the Gram-positive bacterium M.luteus and the Gram-negative bacterium E.coli. This is Galensin from Kassina senegalensis (Senegal running frog).